A 345-amino-acid chain; its full sequence is Fe(3+) ions import ATP-binding protein FbpC (345 aa).

The ABC transporter domain occupies 4–236 (LELHGIGKSY…PVDEPTASFL (233 aa)). An ATP-binding site is contributed by 36 to 43 (GPSGSGKT).

The protein belongs to the ABC transporter superfamily. Fe(3+) ion importer (TC 3.A.1.10) family. In terms of assembly, the complex is composed of two ATP-binding proteins (FbpC), two transmembrane proteins (FbpB) and a solute-binding protein (FbpA).

It is found in the cell inner membrane. The catalysed reaction is Fe(3+)(out) + ATP + H2O = Fe(3+)(in) + ADP + phosphate + H(+). Its function is as follows. Part of the ABC transporter complex FbpABC involved in Fe(3+) ions import. Responsible for energy coupling to the transport system. The sequence is that of Fe(3+) ions import ATP-binding protein FbpC from Serratia marcescens.